A 253-amino-acid polypeptide reads, in one-letter code: DNA repair protein RecO (253 aa).

It belongs to the RecO family.

Involved in DNA repair and RecF pathway recombination. The protein is DNA repair protein RecO of Streptococcus agalactiae serotype Ia (strain ATCC 27591 / A909 / CDC SS700).